The chain runs to 254 residues: MEAHDAHVNSEESENPGAAPYGNFINYYTFNPPENRLSLIPEALLQNIGFTSGDGERVLMLDVGCNSGDLSVALYKHLLNKEACTSDSPRQELYMLGFDLDQDLILRAQTSNPFPQNIQFIPLDITDDTESRAVLQAFLGKFGCSRFHLSTCFAVTMWVHLNHGDAAFLSLLSRLASHSEYLLLEAQPWKCYRSAARRLRKLGRSDFDHFKALKIRGDMAAHAREHLEKQCSMELVQCFGNTSWDRSLLLFRRQ.

The region spanning 34-254 (ENRLSLIPEA…DRSLLLFRRQ (221 aa)) is the Bin3-type SAM domain. S-adenosyl-L-methionine contacts are provided by residues Arg36, Asn66, Asp99, and 124-125 (DI).

This sequence belongs to the methyltransferase superfamily.

The protein localises to the cytoplasm. It catalyses the reaction a 5'-end 5'-phospho-ribonucleoside-RNA + S-adenosyl-L-methionine = a 5'-end (5'-methylphospho)-ribonucleoside-RNA + S-adenosyl-L-homocysteine. It carries out the reaction a 5'-end 5'-phospho-ribonucleoside-RNA + 2 S-adenosyl-L-methionine = a 5'-end (5'-bismethylphospho)-ribonucleoside-RNA + 2 S-adenosyl-L-homocysteine. Its function is as follows. O-methyltransferase that specifically monomethylates 5'-monophosphate of cytoplasmic histidyl tRNA (tRNA(His)), acting as a capping enzyme by protecting tRNA(His) from cleavage by DICER1. Also able, with less efficiently, to methylate the 5' monophosphate of a subset of pre-miRNAs, acting as a negative regulator of miRNA processing. The 5' monophosphate of pre-miRNAs is recognized by DICER1 and is required for pre-miRNAs processing: methylation at this position reduces the processing of pre-miRNAs by DICER1. Was also reported to mediate dimethylation of pre-miR-145; however dimethylation cannot be reproduced by another group which observes a monomethylation of pre-miR-145. The sequence is that of Pre-miRNA 5'-monophosphate methyltransferase (bcdin3d) from Danio rerio (Zebrafish).